A 344-amino-acid polypeptide reads, in one-letter code: Lipase chaperone (344 aa).

Residues 14-34 (AVVYGAVGLAAIAGVAMWSGA) form a helical membrane-spanning segment. The segment at 37-78 (HGGTGASGEPPDASAARGPAAAPPQAAVPASTSLPPSLAGSS) is disordered. Residues 43–78 (SGEPPDASAARGPAAAPPQAAVPASTSLPPSLAGSS) show a composition bias toward low complexity.

Belongs to the lipase chaperone family.

The protein resides in the cell inner membrane. Functionally, may be involved in the folding of the extracellular lipase during its passage through the periplasm. The polypeptide is Lipase chaperone (lifO) (Burkholderia cepacia (Pseudomonas cepacia)).